A 340-amino-acid chain; its full sequence is UDP-N-acetylglucosamine--N-acetylmuramyl-(pentapeptide) pyrophosphoryl-undecaprenol N-acetylglucosamine transferase (340 aa).

Residues 10-12 (TGG), Asn124, Ser179, and Gln277 contribute to the UDP-N-acetyl-alpha-D-glucosamine site.

It belongs to the glycosyltransferase 28 family. MurG subfamily.

The protein resides in the cell inner membrane. It carries out the reaction di-trans,octa-cis-undecaprenyl diphospho-N-acetyl-alpha-D-muramoyl-L-alanyl-D-glutamyl-meso-2,6-diaminopimeloyl-D-alanyl-D-alanine + UDP-N-acetyl-alpha-D-glucosamine = di-trans,octa-cis-undecaprenyl diphospho-[N-acetyl-alpha-D-glucosaminyl-(1-&gt;4)]-N-acetyl-alpha-D-muramoyl-L-alanyl-D-glutamyl-meso-2,6-diaminopimeloyl-D-alanyl-D-alanine + UDP + H(+). The protein operates within cell wall biogenesis; peptidoglycan biosynthesis. In terms of biological role, cell wall formation. Catalyzes the transfer of a GlcNAc subunit on undecaprenyl-pyrophosphoryl-MurNAc-pentapeptide (lipid intermediate I) to form undecaprenyl-pyrophosphoryl-MurNAc-(pentapeptide)GlcNAc (lipid intermediate II). This Sulfurimonas denitrificans (strain ATCC 33889 / DSM 1251) (Thiomicrospira denitrificans (strain ATCC 33889 / DSM 1251)) protein is UDP-N-acetylglucosamine--N-acetylmuramyl-(pentapeptide) pyrophosphoryl-undecaprenol N-acetylglucosamine transferase.